The primary structure comprises 601 residues: Elongation factor 4 (601 aa).

The region spanning 7–189 (RNIRNFSIIA…AIVHRIPPPA (183 aa)) is the tr-type G domain. Residues 19 to 24 (DHGKST) and 136 to 139 (NKID) each bind GTP.

The protein belongs to the TRAFAC class translation factor GTPase superfamily. Classic translation factor GTPase family. LepA subfamily.

Its subcellular location is the cell inner membrane. The catalysed reaction is GTP + H2O = GDP + phosphate + H(+). In terms of biological role, required for accurate and efficient protein synthesis under certain stress conditions. May act as a fidelity factor of the translation reaction, by catalyzing a one-codon backward translocation of tRNAs on improperly translocated ribosomes. Back-translocation proceeds from a post-translocation (POST) complex to a pre-translocation (PRE) complex, thus giving elongation factor G a second chance to translocate the tRNAs correctly. Binds to ribosomes in a GTP-dependent manner. The polypeptide is Elongation factor 4 (Xanthomonas oryzae pv. oryzae (strain MAFF 311018)).